Reading from the N-terminus, the 313-residue chain is Iron-sulfur protein required for NADH dehydrogenase, mitochondrial (313 aa).

Residues 1–22 constitute a mitochondrion transit peptide; the sequence is MATVALLRSLRRRELHAAHISA. ATP is bound at residue 51–58; that stretch reads GKGGVGKS.

This sequence belongs to the Mrp/NBP35 ATP-binding proteins family. Requires [4Fe-4S] cluster as cofactor.

It is found in the mitochondrion matrix. Essential during early vegetative growth. Required for the assembly of the mitochondrial membrane respiratory chain NADH dehydrogenase (Complex I). Involved in mitochondrial translation activity. May deliver of one or more Fe-S clusters to complex I subunits. The chain is Iron-sulfur protein required for NADH dehydrogenase, mitochondrial from Arabidopsis thaliana (Mouse-ear cress).